The chain runs to 505 residues: Salutaridine synthase (505 aa).

The chain crosses the membrane as a helical span at residues 10–30 (DFWMIACTVIIVFALVKFMFS). A heme-binding site is contributed by cysteine 444.

Belongs to the cytochrome P450 family. Heme serves as cofactor.

Its subcellular location is the endoplasmic reticulum membrane. It catalyses the reaction (R)-reticuline + reduced [NADPH--hemoprotein reductase] + O2 = salutaridine + oxidized [NADPH--hemoprotein reductase] + 2 H2O + H(+). Functionally, cytochrome P450 monooxygenase involved in biosynthesis of morphinan-type benzylisoquinoline and opiate alkaloids natural products. Catalyzes the formation of the morphinan alkaloid salutaridine by intramolecular phenol oxidation of (R)-reticuline without the incorporation of oxygen into the product. Can also use (R)-norreticuline as substrate. This Papaver somniferum (Opium poppy) protein is Salutaridine synthase.